The chain runs to 83 residues: Large ribosomal subunit protein bL31B (83 aa).

It belongs to the bacterial ribosomal protein bL31 family. Type B subfamily. Part of the 50S ribosomal subunit.

Binds the 23S rRNA. This is Large ribosomal subunit protein bL31B from Hydrogenovibrio crunogenus (strain DSM 25203 / XCL-2) (Thiomicrospira crunogena).